We begin with the raw amino-acid sequence, 506 residues long: Glycine--tRNA ligase (506 aa).

Residues arginine 99 and glutamate 189 each contribute to the substrate site. ATP-binding positions include arginine 221–glutamate 223, phenylalanine 231–leucine 236, glutamate 306–isoleucine 307, and glycine 365–arginine 368. A substrate-binding site is contributed by leucine 236–glutamate 240. Glutamate 361 to glycine 365 contributes to the substrate binding site.

The protein belongs to the class-II aminoacyl-tRNA synthetase family. As to quaternary structure, homodimer.

It is found in the cytoplasm. It carries out the reaction tRNA(Gly) + glycine + ATP = glycyl-tRNA(Gly) + AMP + diphosphate. Functionally, catalyzes the attachment of glycine to tRNA(Gly). The protein is Glycine--tRNA ligase of Deinococcus radiodurans (strain ATCC 13939 / DSM 20539 / JCM 16871 / CCUG 27074 / LMG 4051 / NBRC 15346 / NCIMB 9279 / VKM B-1422 / R1).